A 271-amino-acid polypeptide reads, in one-letter code: Keratin-associated protein 10-5 (271 aa).

A run of 22 repeats spans residues 26 to 30, 51 to 55, 73 to 77, 78 to 82, 88 to 92, 93 to 97, 98 to 102, 110 to 114, 120 to 124, 130 to 134, 135 to 139, 140 to 144, 152 to 156, 162 to 166, 177 to 181, 187 to 191, 199 to 203, 209 to 213, 214 to 218, 233 to 237, 240 to 244, and 251 to 255. The interval 26 to 255 is 22 X 5 AA repeats of C-C-X(3); that stretch reads CCEPPCGTAP…SYQASCCRPA (230 aa).

It belongs to the KRTAP type 10 family. As to quaternary structure, interacts with hair keratins. As to expression, restricted to a narrow region of the hair fiber cuticle, lying approximately 20 cell layers above the apex of the dermal papilla of the hair root; not detected in any other tissues.

Functionally, in the hair cortex, hair keratin intermediate filaments are embedded in an interfilamentous matrix, consisting of hair keratin-associated proteins (KRTAP), which are essential for the formation of a rigid and resistant hair shaft through their extensive disulfide bond cross-linking with abundant cysteine residues of hair keratins. The matrix proteins include the high-sulfur and high-glycine-tyrosine keratins. The polypeptide is Keratin-associated protein 10-5 (KRTAP10-5) (Homo sapiens (Human)).